A 125-amino-acid polypeptide reads, in one-letter code: Fluoride-specific ion channel FluC (125 aa).

4 helical membrane-spanning segments follow: residues 5–25, 29–49, 66–86, and 95–115; these read LLVA…GALV, LGAG…FLIG, LFLA…SYET, and VGKA…LAFL. Na(+) contacts are provided by G74 and T77.

It belongs to the fluoride channel Fluc/FEX (TC 1.A.43) family.

The protein resides in the cell inner membrane. The catalysed reaction is fluoride(in) = fluoride(out). With respect to regulation, na(+) is not transported, but it plays an essential structural role and its presence is essential for fluoride channel function. In terms of biological role, fluoride-specific ion channel. Important for reducing fluoride concentration in the cell, thus reducing its toxicity. This is Fluoride-specific ion channel FluC from Thermus thermophilus (strain ATCC 27634 / DSM 579 / HB8).